We begin with the raw amino-acid sequence, 162 residues long: MTDQPNNGAVANEENGPQFSLQRIYVRDLSFEAPKSPAIFRQEWTPTVSLDLNTRQKQLEGDFYEVVLTLSVTVNNGDEVAFIVEVQQAGIFLIKGLDDGAMSHTLGAFCPNILFPYAREAIDNLVVRGSFPALMLAPVNFDALYAQELQRMQEAGETPTVQ.

The protein belongs to the SecB family. In terms of assembly, homotetramer, a dimer of dimers. One homotetramer interacts with 1 SecA dimer.

The protein localises to the cytoplasm. One of the proteins required for the normal export of preproteins out of the cell cytoplasm. It is a molecular chaperone that binds to a subset of precursor proteins, maintaining them in a translocation-competent state. It also specifically binds to its receptor SecA. The sequence is that of Protein-export protein SecB from Pseudomonas savastanoi pv. phaseolicola (strain 1448A / Race 6) (Pseudomonas syringae pv. phaseolicola (strain 1448A / Race 6)).